Here is a 335-residue protein sequence, read N- to C-terminus: ATP-dependent 6-phosphofructokinase (335 aa).

Glycine 11 is a binding site for ATP. 21 to 25 (RAVVR) contributes to the ADP binding site. Residues 72–73 (RY) and 102–105 (GDGS) each bind ATP. Residue aspartate 103 participates in Mg(2+) binding. Residue 125 to 127 (TID) participates in substrate binding. Residue aspartate 127 is the Proton acceptor of the active site. Arginine 154 lines the ADP pocket. Substrate contacts are provided by residues arginine 162 and 169–171 (MGR). Residues 185–187 (GAD) and 213–215 (KKH) contribute to the ADP site. Substrate contacts are provided by residues glutamate 222, arginine 244, and 250–253 (HIQR).

The protein belongs to the phosphofructokinase type A (PFKA) family. ATP-dependent PFK group I subfamily. Prokaryotic clade 'B1' sub-subfamily. As to quaternary structure, homotetramer. Mg(2+) is required as a cofactor.

The protein localises to the cytoplasm. The catalysed reaction is beta-D-fructose 6-phosphate + ATP = beta-D-fructose 1,6-bisphosphate + ADP + H(+). It participates in carbohydrate degradation; glycolysis; D-glyceraldehyde 3-phosphate and glycerone phosphate from D-glucose: step 3/4. With respect to regulation, allosterically activated by ADP and other diphosphonucleosides, and allosterically inhibited by phosphoenolpyruvate. Functionally, catalyzes the phosphorylation of D-fructose 6-phosphate to fructose 1,6-bisphosphate by ATP, the first committing step of glycolysis. The protein is ATP-dependent 6-phosphofructokinase of Streptococcus pneumoniae serotype 19F (strain G54).